We begin with the raw amino-acid sequence, 370 residues long: tRNA-specific 2-thiouridylase MnmA (370 aa).

ATP contacts are provided by residues alanine 19–serine 26 and leucine 45. Residue cysteine 113 is the Nucleophile of the active site. A disulfide bridge links cysteine 113 with cysteine 209. Glycine 137 lines the ATP pocket. An interaction with tRNA region spans residues lysine 159–glutamine 161. Residue cysteine 209 is the Cysteine persulfide intermediate of the active site.

The protein belongs to the MnmA/TRMU family.

The protein resides in the cytoplasm. It carries out the reaction S-sulfanyl-L-cysteinyl-[protein] + uridine(34) in tRNA + AH2 + ATP = 2-thiouridine(34) in tRNA + L-cysteinyl-[protein] + A + AMP + diphosphate + H(+). Catalyzes the 2-thiolation of uridine at the wobble position (U34) of tRNA, leading to the formation of s(2)U34. The polypeptide is tRNA-specific 2-thiouridylase MnmA (Rickettsia conorii (strain ATCC VR-613 / Malish 7)).